Here is a 284-residue protein sequence, read N- to C-terminus: Ribosomal RNA small subunit methyltransferase A (284 aa).

Positions 33, 35, 60, 81, 101, and 124 each coordinate S-adenosyl-L-methionine.

It belongs to the class I-like SAM-binding methyltransferase superfamily. rRNA adenine N(6)-methyltransferase family. RsmA subfamily.

It is found in the cytoplasm. The catalysed reaction is adenosine(1518)/adenosine(1519) in 16S rRNA + 4 S-adenosyl-L-methionine = N(6)-dimethyladenosine(1518)/N(6)-dimethyladenosine(1519) in 16S rRNA + 4 S-adenosyl-L-homocysteine + 4 H(+). In terms of biological role, specifically dimethylates two adjacent adenosines (A1518 and A1519) in the loop of a conserved hairpin near the 3'-end of 16S rRNA in the 30S particle. May play a critical role in biogenesis of 30S subunits. The protein is Ribosomal RNA small subunit methyltransferase A of Chlamydia felis (strain Fe/C-56) (Chlamydophila felis).